We begin with the raw amino-acid sequence, 102 residues long: Sulfur globule protein CV3 (102 aa).

The N-terminal stretch at 1–25 is a signal peptide; that stretch reads MTMKRLLLVSTLAGASALATLPANA.

As to quaternary structure, the protein envelope of the sulfur globules is composed of the three different proteins CV1, CV2 and CV3.

Functionally, structural protein of the sulfur globules, which are intracellular globules that serve for sulfur storage in purple sulfur bacteria. The sequence is that of Sulfur globule protein CV3 (sgpC) from Allochromatium vinosum (strain ATCC 17899 / DSM 180 / NBRC 103801 / NCIMB 10441 / D) (Chromatium vinosum).